Consider the following 72-residue polypeptide: Protein kish-A (72 aa).

The signal sequence occupies residues 1–26; it reads MSAIFNFQSLLTVILLLICTCAYIRS. At 27-53 the chain is on the extracellular side; sequence LTPSLLDKNKTGFLGIFWKCARIGERK. N-linked (GlcNAc...) asparagine glycosylation occurs at Asn35. The chain crosses the membrane as a helical span at residues 54-71; that stretch reads SPYVAFCCIVMALTILFS. Glu72 is a topological domain (cytoplasmic).

The protein belongs to the KISH family.

Its subcellular location is the golgi apparatus membrane. Functionally, involved in the early part of the secretory pathway. This chain is Protein kish-A (tmem167a), found in Danio rerio (Zebrafish).